A 461-amino-acid polypeptide reads, in one-letter code: UDP-N-acetylmuramate--L-alanine ligase (461 aa).

112-118 contributes to the ATP binding site; that stretch reads GTHGKTT.

Belongs to the MurCDEF family.

The protein resides in the cytoplasm. The enzyme catalyses UDP-N-acetyl-alpha-D-muramate + L-alanine + ATP = UDP-N-acetyl-alpha-D-muramoyl-L-alanine + ADP + phosphate + H(+). The protein operates within cell wall biogenesis; peptidoglycan biosynthesis. Cell wall formation. This Geobacter sp. (strain M21) protein is UDP-N-acetylmuramate--L-alanine ligase.